Reading from the N-terminus, the 66-residue chain is Large ribosomal subunit protein bL35 (66 aa).

The segment covering 1–15 (MPKMKTKSSAKKRFK) has biased composition (basic residues). Residues 1-32 (MPKMKTKSSAKKRFKMTATGKVRAGQAGKRHG) are disordered.

The protein belongs to the bacterial ribosomal protein bL35 family.

The chain is Large ribosomal subunit protein bL35 from Dinoroseobacter shibae (strain DSM 16493 / NCIMB 14021 / DFL 12).